The sequence spans 208 residues: High frequency lysogenization protein HflD homolog (208 aa).

This sequence belongs to the HflD family.

The protein localises to the cytoplasm. It localises to the cell inner membrane. In Yersinia enterocolitica serotype O:8 / biotype 1B (strain NCTC 13174 / 8081), this protein is High frequency lysogenization protein HflD homolog.